The following is a 356-amino-acid chain: Putative zinc finger protein At1g68190 (356 aa).

Residues C14, C17, C37, H42, C57, C60, C80, and H85 each coordinate Zn(2+). A B box-type 1; atypical zinc finger spans residues 14–56 (CEFCKAYRAVVYCIADTANLCLTCDAKVHSANSLSGRHLRTVL). The B box-type 2; atypical zinc finger occupies 57–97 (CDSCKNQPCVVRCFDHKMFLCHGCNDKFHGGGSSEHRRRDL). A disordered region spans residues 159 to 178 (ENGSSSLTERGDPSPLELPK).

The protein belongs to the CONSTANS family.

The protein resides in the nucleus. This Arabidopsis thaliana (Mouse-ear cress) protein is Putative zinc finger protein At1g68190.